Consider the following 563-residue polypeptide: Calmodulin-binding protein 60 G (563 aa).

A calmodulin-binding region spans residues 1–76; sequence MKIRNSPSFH…SSCVSMERSR (76 aa). The segment at 147-263 is DNA-binding; the sequence is ESWTVEGFNR…VSATRLAERK (117 aa).

This sequence belongs to the plant ACBP60 protein family. Interacts with calmodulin (CaM) in the presence of calcium ions; this interaction is required for defense responses. As to quaternary structure, (Microbial infection) Interacts with V.dahliae SCP41; the interaction is direct and inhibits CBP60G. In terms of tissue distribution, expressed in seedlings, roots, leaves, inflorescences and flowers, and, to a lower extent, in siliques. Particularly present in guard cells.

It is found in the nucleus. In terms of biological role, transcription activator that binds DNA in a sequence-specific manner, 5'-GAAATTTTGG-3', to promote the expression of target genes. Recruited to the promoter of ICS1 and other defense-related genes (e.g. PR1, PR2 and EDS5) in response to both biotic (e.g. Pseudomonas syringae pv. maculicola ES4326, P.syringae pv. tomato DC3000, and microbe-associated molecular patterns (MAMPs) such as flg22) and abiotic stresses (e.g. UV-B, drought and abscisic acid), thus triggering rapid defense responses by stimulating salicylic acid (SA) biosynthesis. Involved in basal and systemic acquired resistance to P.syringae and Hyaloperonospora arabidopsidis. Mediates resistance to drought and sensitivity to abscisic acid (ABA), especially for ABA-mediated signaling process that regulates early seedling growth. In Arabidopsis thaliana (Mouse-ear cress), this protein is Calmodulin-binding protein 60 G.